The following is a 365-amino-acid chain: Protein mab-21-like (365 aa).

This sequence belongs to the mab-21 family.

The protein is Protein mab-21-like of Anopheles gambiae (African malaria mosquito).